The chain runs to 310 residues: Ribosomal RNA small subunit methyltransferase H (310 aa).

Residues 33–35 (GGH), D52, F79, D98, and Q105 contribute to the S-adenosyl-L-methionine site.

Belongs to the methyltransferase superfamily. RsmH family.

It localises to the cytoplasm. The enzyme catalyses cytidine(1402) in 16S rRNA + S-adenosyl-L-methionine = N(4)-methylcytidine(1402) in 16S rRNA + S-adenosyl-L-homocysteine + H(+). Its function is as follows. Specifically methylates the N4 position of cytidine in position 1402 (C1402) of 16S rRNA. The protein is Ribosomal RNA small subunit methyltransferase H of Campylobacter jejuni subsp. jejuni serotype O:6 (strain 81116 / NCTC 11828).